Consider the following 395-residue polypeptide: Vascular endothelial growth factor A, long form (395 aa).

Disordered regions lie at residues Met-1–Val-45 and Glu-73–Gly-175. Residues Glu-73 to Ser-85 are compositionally biased toward low complexity. The segment covering Gln-91 to Glu-102 has biased composition (acidic residues). Low complexity-rich tracts occupy residues Ala-123–Ser-143 and Arg-165–Gly-175. Disulfide bonds link Cys-232–Cys-274, Cys-263–Cys-308, and Cys-267–Cys-310. An N-linked (GlcNAc...) asparagine glycan is attached at Asn-281. Over residues Lys-314–Ser-323 the composition is skewed to basic and acidic residues. The interval Lys-314 to Ser-344 is disordered. Residues Val-324–Tyr-340 show a composition bias toward basic residues.

This sequence belongs to the PDGF/VEGF growth factor family. In terms of assembly, homodimer; disulfide-linked. Also found as heterodimer with PGF. Interacts with NRP1. Interacts with isoform 2 of BSG. Interacts with CD82; this interaction inhibits VEGFA-mediated signaling pathway. Post-translationally, produced by use of an alternative upstream CUG codon and post-translationally processed into the N-terminal N-VEGF form and the C-terminal secreted VEGFA form. Higher expression in pituitary tumors than the pituitary gland. In terms of tissue distribution, widely expressed. As to expression, not widely expressed.

The protein resides in the cytoplasm. The protein localises to the nucleus. It is found in the secreted. Its subcellular location is the endoplasmic reticulum. It localises to the golgi apparatus. The protein resides in the extracellular space. The protein localises to the extracellular matrix. In terms of biological role, participates in the induction of key genes involved in the response to hypoxia and in the induction of angiogenesis such as HIF1A. Involved in protecting cells from hypoxia-mediated cell death. Its function is as follows. Growth factor active in angiogenesis, vasculogenesis and endothelial cell growth. Induces endothelial cell proliferation, promotes cell migration, inhibits apoptosis and induces permeabilization of blood vessels. Binds to the FLT1/VEGFR1 and KDR/VEGFR2 receptors, heparan sulfate and heparin. Binds to the NRP1/neuropilin-1 receptor. Binding to NRP1 initiates a signaling pathway needed for motor neuron axon guidance and cell body migration, including for the caudal migration of facial motor neurons from rhombomere 4 to rhombomere 6 during embryonic development. Also binds the DEAR/FBXW7-AS1 receptor. Binds to the KDR receptor but does not activate downstream signaling pathways, does not activate angiogenesis and inhibits tumor growth. The polypeptide is Vascular endothelial growth factor A, long form (VEGFA) (Homo sapiens (Human)).